A 316-amino-acid polypeptide reads, in one-letter code: ATP synthase gamma chain (316 aa).

Belongs to the ATPase gamma chain family. In terms of assembly, F-type ATPases have 2 components, CF(1) - the catalytic core - and CF(0) - the membrane proton channel. CF(1) has five subunits: alpha(3), beta(3), gamma(1), delta(1), epsilon(1). CF(0) has three main subunits: a, b and c.

It localises to the cellular thylakoid membrane. Produces ATP from ADP in the presence of a proton gradient across the membrane. The gamma chain is believed to be important in regulating ATPase activity and the flow of protons through the CF(0) complex. The chain is ATP synthase gamma chain from Prochlorococcus marinus (strain SARG / CCMP1375 / SS120).